Here is a 264-residue protein sequence, read N- to C-terminus: Thymidylate synthase (264 aa).

Arg-21 contributes to the dUMP binding site. His-51 is a (6R)-5,10-methylene-5,6,7,8-tetrahydrofolate binding site. 126–127 (RR) serves as a coordination point for dUMP. Cys-146 serves as the catalytic Nucleophile. Residues 166-169 (RSAD), Asn-177, and 207-209 (HLY) contribute to the dUMP site. A (6R)-5,10-methylene-5,6,7,8-tetrahydrofolate-binding site is contributed by Asp-169. Ala-263 is a (6R)-5,10-methylene-5,6,7,8-tetrahydrofolate binding site.

It belongs to the thymidylate synthase family. Bacterial-type ThyA subfamily. As to quaternary structure, homodimer.

It localises to the cytoplasm. The catalysed reaction is dUMP + (6R)-5,10-methylene-5,6,7,8-tetrahydrofolate = 7,8-dihydrofolate + dTMP. It functions in the pathway pyrimidine metabolism; dTTP biosynthesis. Its function is as follows. Catalyzes the reductive methylation of 2'-deoxyuridine-5'-monophosphate (dUMP) to 2'-deoxythymidine-5'-monophosphate (dTMP) while utilizing 5,10-methylenetetrahydrofolate (mTHF) as the methyl donor and reductant in the reaction, yielding dihydrofolate (DHF) as a by-product. This enzymatic reaction provides an intracellular de novo source of dTMP, an essential precursor for DNA biosynthesis. The protein is Thymidylate synthase of Paramagnetospirillum magneticum (strain ATCC 700264 / AMB-1) (Magnetospirillum magneticum).